The following is a 105-amino-acid chain: Replication initiation control protein YabA (105 aa).

4 residues coordinate Zn(2+): histidine 79, cysteine 81, cysteine 95, and cysteine 98.

It belongs to the YabA family. Homotetramer. Interacts with both DnaA and DnaN, acting as a bridge between these two proteins. Zn(2+) serves as cofactor.

It is found in the cytoplasm. It localises to the nucleoid. Its function is as follows. Involved in control of chromosome replication initiation. Inhibits the cooperative binding of DnaA to the oriC region, thus negatively regulating initiation of chromosome replication. Inhibits the ability of DnaA-ATP to form a helix on DNA; does not disassemble preformed DnaA-DNA helices. Decreases the residence time of DnaA on the chromosome at its binding sites (oriC, replication forks and promoter-binding sites). Tethers DnaA to the replication machinery via the DNA polymerase beta sliding clamp subunit (dnaN). Associates with oriC and other DnaA targets on the chromosome in a DnaA-dependent manner. The sequence is that of Replication initiation control protein YabA from Streptococcus sanguinis (strain SK36).